A 156-amino-acid chain; its full sequence is Protein BUNDLE SHEATH DEFECTIVE 2, chloroplastic (156 aa).

The N-terminal 41 residues, 1 to 41 (MNSAALNARTASVAPQPQACHACKCRQLLSRRVPPAQRQVE), are a transit peptide targeting the chloroplast. Zn(2+) contacts are provided by C78, C81, C89, C92, C133, C136, C144, and C147.

It belongs to the BSD2 chaperone family. In terms of assembly, interacts with the RuBisCo large subunit (RbcL) assembled as an intermediate complex made of eight RbcL and eight BSD2 subunits.

It localises to the plastid. It is found in the chloroplast stroma. In terms of biological role, chloroplast chaperone required for RuBisCo biogenesis and translational regulation of the RuBisCo large subunit (RbcL). Stabilizes an end-state assembly intermediate of eight RbcL subunits until the small subunits (RBCSs) become available to produce a complete stable RuBisCo complex containing eight small and eight large subunits. The chain is Protein BUNDLE SHEATH DEFECTIVE 2, chloroplastic from Chlamydomonas reinhardtii (Chlamydomonas smithii).